The following is a 233-amino-acid chain: UPF0280 protein AF_0649 (233 aa).

It belongs to the UPF0280 family.

The protein is UPF0280 protein AF_0649 of Archaeoglobus fulgidus (strain ATCC 49558 / DSM 4304 / JCM 9628 / NBRC 100126 / VC-16).